Reading from the N-terminus, the 1529-residue chain is uncharacterized protein (1529 aa).

Positions 1–11 (MDKNNNNNNSN) are enriched in low complexity. Disordered stretches follow at residues 1–85 (MDKN…SKGV), 335–371 (LLSN…WSSS), 660–694 (LPNL…TATA), 798–843 (NCNI…SSYS), 1016–1035 (SSLP…NTNN), 1334–1364 (QQQQ…QLQQ), and 1454–1497 (QQQV…SRLP). Over residues 24–42 (QKRVQNPSFSSGQSRTVPS) the composition is skewed to polar residues. Low complexity predominate over residues 51-79 (ISSSSSSSSISTTNNTTTTTTSGTGSTSS). Positions 810–833 (NNNNNNNNNNNNNNNNNNNNNNNN) are enriched in low complexity. Polar residues-rich tracts occupy residues 834-843 (VLPRSNSSYS) and 1016-1027 (SSLPISQNLSDD). Positions 1454–1494 (QQQVQTPSSPQTLASLLGNSSSNTLTSSSSTLSLNESSTLS) are enriched in low complexity.

This is an uncharacterized protein from Dictyostelium discoideum (Social amoeba).